The following is a 250-amino-acid chain: Manganese transport system ATP-binding protein MntB (250 aa).

The ABC transporter domain occupies 4–236 (VELDNVTVAY…NLQKTYGGRL (233 aa)). 36-43 (GPNGAGKS) serves as a coordination point for ATP.

It belongs to the ABC transporter superfamily. As to quaternary structure, the complex is probably composed of two ATP-binding proteins (MntB), two transmembrane proteins (MntC and MntD) and a solute-binding protein (MntA).

Its subcellular location is the cell membrane. Probably part of the ABC transporter complex MntABCD involved in manganese import. Probably responsible for energy coupling to the transport system. This is Manganese transport system ATP-binding protein MntB from Bacillus subtilis (strain 168).